Reading from the N-terminus, the 62-residue chain is MTITFQLAVFALIVTSFLLVIGVPVVLASPDGWSSNKNTVFSGASLWIGLVFLVGILNSFVS.

2 helical membrane passes run 8 to 28 (AVFA…VVLA) and 41 to 61 (FSGA…NSFV).

The protein belongs to the PsbZ family. In terms of assembly, PSII is composed of 1 copy each of membrane proteins PsbA, PsbB, PsbC, PsbD, PsbE, PsbF, PsbH, PsbI, PsbJ, PsbK, PsbL, PsbM, PsbT, PsbY, PsbZ, Psb30/Ycf12, at least 3 peripheral proteins of the oxygen-evolving complex and a large number of cofactors. It forms dimeric complexes.

It localises to the plastid. It is found in the chloroplast thylakoid membrane. Its function is as follows. May control the interaction of photosystem II (PSII) cores with the light-harvesting antenna, regulates electron flow through the 2 photosystem reaction centers. PSII is a light-driven water plastoquinone oxidoreductase, using light energy to abstract electrons from H(2)O, generating a proton gradient subsequently used for ATP formation. The polypeptide is Photosystem II reaction center protein Z (Zygnema circumcarinatum (Green alga)).